A 299-amino-acid polypeptide reads, in one-letter code: Bifunctional protein FolD (299 aa).

NADP(+)-binding positions include glycine 168–serine 170, serine 193, and isoleucine 234.

It belongs to the tetrahydrofolate dehydrogenase/cyclohydrolase family. Homodimer.

The enzyme catalyses (6R)-5,10-methylene-5,6,7,8-tetrahydrofolate + NADP(+) = (6R)-5,10-methenyltetrahydrofolate + NADPH. It carries out the reaction (6R)-5,10-methenyltetrahydrofolate + H2O = (6R)-10-formyltetrahydrofolate + H(+). It participates in one-carbon metabolism; tetrahydrofolate interconversion. Its function is as follows. Catalyzes the oxidation of 5,10-methylenetetrahydrofolate to 5,10-methenyltetrahydrofolate and then the hydrolysis of 5,10-methenyltetrahydrofolate to 10-formyltetrahydrofolate. In Agrobacterium fabrum (strain C58 / ATCC 33970) (Agrobacterium tumefaciens (strain C58)), this protein is Bifunctional protein FolD.